The following is a 571-amino-acid chain: Acetolactate synthase large subunit (571 aa).

Glu51 serves as a coordination point for thiamine diphosphate. FAD contacts are provided by residues Arg153, 261–282 (HGTY…IGVR), and 304–323 (DIDP…IVGD). The tract at residues 394-474 (QHQMFTALYY…VLILNLNNSS (81 aa)) is thiamine pyrophosphate binding. Residues Asp445 and Asn472 each contribute to the Mg(2+) site.

The protein belongs to the TPP enzyme family. Dimer of large and small chains. Mg(2+) serves as cofactor. Requires thiamine diphosphate as cofactor.

It catalyses the reaction 2 pyruvate + H(+) = (2S)-2-acetolactate + CO2. Its pathway is amino-acid biosynthesis; L-isoleucine biosynthesis; L-isoleucine from 2-oxobutanoate: step 1/4. It functions in the pathway amino-acid biosynthesis; L-valine biosynthesis; L-valine from pyruvate: step 1/4. This is Acetolactate synthase large subunit (ilvI) from Buchnera aphidicola subsp. Schizaphis graminum (strain Sg).